Here is a 694-residue protein sequence, read N- to C-terminus: Cyclic nucleotide-gated channel alpha-3 (694 aa).

2 stretches are compositionally biased toward polar residues: residues 1 to 11 (MAKINTQYSHP) and 112 to 123 (SQESNAQANVGS). 2 disordered regions span residues 1 to 24 (MAKI…SDRD) and 109 to 152 (EVSS…EEKK). The Cytoplasmic segment spans residues 1–170 (MAKINTQYSH…VDPSSNLYYR (170 aa)). Residues 171-192 (WLTAIALPVFYNWYLLICRACF) form a helical membrane-spanning segment. Over 193–198 (DELQSE) the chain is Extracellular. Residues 199–219 (YLMLWLVLDYSADVLYVLDVL) traverse the membrane as a helical segment. At 220–246 (VRARTGFLEQGLMVSDTNRLWQHYKTT) the chain is on the cytoplasmic side. A helical membrane pass occupies residues 247 to 266 (TQFKLDVLSLVPTDLAYLKV). The Extracellular segment spans residues 267-270 (GTNY). The chain crosses the membrane as a helical span at residues 271 to 288 (PEVRFNRLLKFSRLFEFF). The Cytoplasmic portion of the chain corresponds to 289–298 (DRTETRTNYP). Positions 298 to 406 (PNMFRIGNLV…GNVGSMISNM (109 aa)) are ion conduction pathway. Residues 299 to 321 (NMFRIGNLVLYILIIIHWNACIY) traverse the membrane as a helical segment. Residues 322–347 (FAISKFIGFGTDSWVYPNISIPEHGR) lie on the Extracellular side of the membrane. The N-linked (GalNAc...) asparagine glycan is linked to Asn339. Helical transmembrane passes span 348–378 (LSRK…DEEY) and 379–403 (LFVV…GSMI). A selectivity filter region spans residues 365–368 (TIGE). Topologically, residues 404 to 694 (SNMNASRAEF…DATKTEDKQQ (291 aa)) are cytoplasmic. Positions 408–485 (ASRAEFQAKI…TLKKVRIFQD (78 aa)) are C-linker. Residues 488–608 (AGLLVELVLK…EEKGRQILMK (121 aa)) are cyclic nucleotide-binding domain. Residues Gly548, Glu549, Ser551, Arg564, Thr565, and Asp609 each contribute to the 3',5'-cyclic GMP site. Residues 626–669 (LEEKVEQLGSSLDTLQTRFARLLAEYNATQMKMKQRLSQLESQV) adopt a coiled-coil conformation. The disordered stretch occupies residues 662–694 (LSQLESQVKGGGDKPLADGEVPGDATKTEDKQQ).

Belongs to the cyclic nucleotide-gated cation channel (TC 1.A.1.5) family. CNGA3 subfamily. Forms heterotetrameric channels composed of CNGA3 and CNGB3 subunits with 3:1 stoichiometry. As to expression, prominently expressed in retina.

Its subcellular location is the cell membrane. The enzyme catalyses Ca(2+)(in) = Ca(2+)(out). It catalyses the reaction Na(+)(in) = Na(+)(out). It carries out the reaction K(+)(in) = K(+)(out). The catalysed reaction is NH4(+)(in) = NH4(+)(out). The enzyme catalyses Rb(+)(in) = Rb(+)(out). It catalyses the reaction Li(+)(in) = Li(+)(out). It carries out the reaction Cs(+)(in) = Cs(+)(out). Inhibited by L-cis-diltiazem. In terms of biological role, pore-forming subunit of the cone cyclic nucleotide-gated channel. Mediates cone photoresponses at bright light converting transient changes in intracellular cGMP levels into electrical signals. In the dark, cGMP levels are high and keep the channel open enabling a steady inward current carried by Na(+) and Ca(2+) ions that leads to membrane depolarization and neurotransmitter release from synaptic terminals. Upon photon absorption cGMP levels decline leading to channel closure and membrane hyperpolarization that ultimately slows neurotransmitter release and signals the presence of light, the end point of the phototransduction cascade. Pore-forming subunit of the gustatory cyclic nucleotide-gated channel. In the taste buds, may sense oral extracellular pH and conduct ion currents that modulate the excitability of taste cells. Conducts cGMP- and cAMP-gated ion currents, with permeability for monovalent and divalent cations. In Homo sapiens (Human), this protein is Cyclic nucleotide-gated channel alpha-3.